Here is a 74-residue protein sequence, read N- to C-terminus: Alpha-elapitoxin-Aa2d (74 aa).

5 disulfide bridges follow: Cys3–Cys21, Cys14–Cys42, Cys27–Cys31, Cys46–Cys57, and Cys58–Cys63.

It belongs to the three-finger toxin family. Long-chain subfamily. Type II alpha-neurotoxin sub-subfamily. As to expression, expressed by the venom gland.

It localises to the secreted. Its function is as follows. Binds with high affinity to muscular (alpha-1/CHRNA1) and neuronal (alpha-7/CHRNA7) nicotinic acetylcholine receptor (nAChR) and inhibits acetylcholine from binding to the receptor, thereby impairing neuromuscular and neuronal transmission. The polypeptide is Alpha-elapitoxin-Aa2d (Acanthophis antarcticus (Common death adder)).